The chain runs to 110 residues: Cysteine-rich and transmembrane domain-containing protein 1 (110 aa).

Over residues 1-18 the composition is skewed to pro residues; sequence MNYENPPPYASPPAPYPP. Positions 1 to 45 are disordered; it reads MNYENPPPYASPPAPYPPYGQQQPSYPVPNQYPGNPPGPVGYQPA. The segment covering 19–29 has biased composition (low complexity); it reads YGQQQPSYPVP. A helical transmembrane segment spans residues 87–104; that stretch reads SGESACLTACWTALCCCC.

The protein belongs to the CYSTM1 family.

Its subcellular location is the membrane. This is Cysteine-rich and transmembrane domain-containing protein 1 (cystm1) from Xenopus tropicalis (Western clawed frog).